The following is a 627-amino-acid chain: MPDTAGLSGPDIINAFVKRLPNNPGVYRMFNSDGGVLYVGKARNLKKRVSNYARGIGHSNRITRMIRETVTMEFVVTRTETEALLLEANLIKRLRPRFNVLMRDDKSFPYILLTGGHRAPGIFKHRGARSRKGDYFGPFASAGAVGRTINALQRAFLLRTCTDSVFETRTRPCLLYQIKRCSAPCTYEISDEDYAGLVAEAKAFLSGKSQSVKDHLAAAMQAASADLDFEHAAVYRDRLAALSHVQSHQGINPQTVEEADVFAIHQEGGMTCIQVFFFRTGQNWGNRAYFPKADSSLGPAEVLGAFLSQFYDDKPCPKLVLLSETVEEQSLITEALSTRAGHKVQVSVPQRGEKKELVQHALTNAREALGRRLAETSSQARLLQGLAETFGLPRAPRRIEVYDNSHIMGTNAVGGMIVAGPEGFVKNQYRKFNIRSTDITPGDDFGMMREVIERRFSRLVKEHGTPAGEVKNPDAFPAWPDVILIDGGQGQVGAVRQILGEMGISDLVTAIGIAKGVDREAGRERFFMEGKQPFTLPPRDPVLYFIQRLRDEAHRFAIGTHRARRKKEIVRNPLDEIAGIGPTRKRALLHHFGTAKAVSRAAVEDLMQIDGISEAMARAIHDHFRDK.

A GIY-YIG domain is found at 22-100; it reads NNPGVYRMFN…IKRLRPRFNV (79 aa). Positions 210 to 245 constitute a UVR domain; that stretch reads QSVKDHLAAAMQAASADLDFEHAAVYRDRLAALSHV.

This sequence belongs to the UvrC family. Interacts with UvrB in an incision complex.

The protein localises to the cytoplasm. The UvrABC repair system catalyzes the recognition and processing of DNA lesions. UvrC both incises the 5' and 3' sides of the lesion. The N-terminal half is responsible for the 3' incision and the C-terminal half is responsible for the 5' incision. The sequence is that of UvrABC system protein C from Brucella abortus biovar 1 (strain 9-941).